We begin with the raw amino-acid sequence, 255 residues long: F-box/SPRY domain-containing protein 1 (255 aa).

Residues 3–51 form the F-box domain; sequence DPVAALCNYNVLEVIFSYLELDDLSHCSQVCKSWNLFLNDENSDVWRWH. Residues 61–253 enclose the B30.2/SPRY domain; the sequence is LKSDLLSSVS…VSMVYLGTPM (193 aa).

This sequence belongs to the FBXO45/Fsn family. Component of an E3 ubiquitin ligase complex composed of hiw and Fsn.

It is found in the synapse. It participates in protein modification; protein ubiquitination. Its function is as follows. Required in the presynaptic motoneuron to down-regulate the levels of wnd and restrain synaptic terminal growth at the neuromuscular junction (NMJ). This Drosophila ananassae (Fruit fly) protein is F-box/SPRY domain-containing protein 1.